The chain runs to 25 residues: Hemocyanin subunit 3 (25 aa).

This sequence belongs to the tyrosinase family. Hemocyanin subfamily. Hemolymph.

It is found in the secreted. The protein resides in the extracellular space. In terms of biological role, hemocyanins are copper-containing oxygen carriers occurring freely dissolved in the hemolymph of many mollusks and arthropods. The chain is Hemocyanin subunit 3 from Maja squinado (Mediterranean spider crab).